The sequence spans 282 residues: Phosphatidylglycerol--prolipoprotein diacylglyceryl transferase (282 aa).

Helical transmembrane passes span 23–43 (IGPLAIHWYGLAYVAGILLGW), 71–91 (FIVWAALGVVLGGRLGYIFFY), 106–126 (IWNGGMSFHGGLTGTTIAMII), and 132–152 (GIPIWSLFDIVATVVPFGLFF). Arg154 is a binding site for a 1,2-diacyl-sn-glycero-3-phospho-(1'-sn-glycerol). A run of 3 helical transmembrane segments spans residues 189 to 209 (LYEAGLEGIVLLLVLAALVYG), 217 to 237 (GFITGVFVCGYALSRIFVEFF), and 252 to 272 (WLTMGMVLSSPMILLGLWAML).

This sequence belongs to the Lgt family.

It is found in the cell inner membrane. The catalysed reaction is L-cysteinyl-[prolipoprotein] + a 1,2-diacyl-sn-glycero-3-phospho-(1'-sn-glycerol) = an S-1,2-diacyl-sn-glyceryl-L-cysteinyl-[prolipoprotein] + sn-glycerol 1-phosphate + H(+). It functions in the pathway protein modification; lipoprotein biosynthesis (diacylglyceryl transfer). Catalyzes the transfer of the diacylglyceryl group from phosphatidylglycerol to the sulfhydryl group of the N-terminal cysteine of a prolipoprotein, the first step in the formation of mature lipoproteins. In Rhizobium leguminosarum bv. trifolii (strain WSM2304), this protein is Phosphatidylglycerol--prolipoprotein diacylglyceryl transferase.